The primary structure comprises 273 residues: Formamidopyrimidine-DNA glycosylase (273 aa).

Proline 2 serves as the catalytic Schiff-base intermediate with DNA. The active-site Proton donor is glutamate 3. Lysine 59 functions as the Proton donor; for beta-elimination activity in the catalytic mechanism. DNA is bound by residues histidine 92 and arginine 111. Residues 239-273 (KVYGKTGEPCVICGTPIEKIKLNGRGTHFCPHCQK) form an FPG-type zinc finger. The active-site Proton donor; for delta-elimination activity is the arginine 263.

Belongs to the FPG family. Monomer. Zn(2+) serves as cofactor.

It carries out the reaction Hydrolysis of DNA containing ring-opened 7-methylguanine residues, releasing 2,6-diamino-4-hydroxy-5-(N-methyl)formamidopyrimidine.. It catalyses the reaction 2'-deoxyribonucleotide-(2'-deoxyribose 5'-phosphate)-2'-deoxyribonucleotide-DNA = a 3'-end 2'-deoxyribonucleotide-(2,3-dehydro-2,3-deoxyribose 5'-phosphate)-DNA + a 5'-end 5'-phospho-2'-deoxyribonucleoside-DNA + H(+). Functionally, involved in base excision repair of DNA damaged by oxidation or by mutagenic agents. Acts as a DNA glycosylase that recognizes and removes damaged bases. Has a preference for oxidized purines, such as 7,8-dihydro-8-oxoguanine (8-oxoG). Has AP (apurinic/apyrimidinic) lyase activity and introduces nicks in the DNA strand. Cleaves the DNA backbone by beta-delta elimination to generate a single-strand break at the site of the removed base with both 3'- and 5'-phosphates. This chain is Formamidopyrimidine-DNA glycosylase, found in Listeria innocua serovar 6a (strain ATCC BAA-680 / CLIP 11262).